A 143-amino-acid polypeptide reads, in one-letter code: Hemoglobin cathodic subunit alpha (143 aa).

The residue at position 2 (serine 2) is an N-acetylserine. In terms of domain architecture, Globin spans 2-143 (SLTAKDKSLI…LGAALSDKYR (142 aa)). Histidine 60 provides a ligand contact to O2. Histidine 89 is a binding site for heme b.

It belongs to the globin family. As to quaternary structure, heterotetramer of two alpha chains and two beta chains. In terms of tissue distribution, red blood cells.

Involved in oxygen transport from gills to the various peripheral tissues. This is Hemoglobin cathodic subunit alpha from Anguilla anguilla (European freshwater eel).